A 152-amino-acid chain; its full sequence is ASP external chaperone (152 aa).

A signal peptide spans 1–22; it reads MNKPVTLLLATLLAPLSGQLCA.

As to quaternary structure, forms a complex with the serine protease ASP in the periplasm. After translocation of the ASP-ORF2 complex from the periplasm to the extracellular space, the complex is dissociated in a pH-dependent manner.

It is found in the periplasm. It localises to the secreted. With respect to regulation, degraded by ASP after secretion and dissociation of the ASP-ORF2 complex. Its function is as follows. Required for the production of the active form of the Aeromonas extracellular serine protease (ASP). Acts as a chaperone that helps ASP form an active structure in the periplasm. Formation of a complex with ASP in the periplasm also inactivates the protease activity and likely protects ASP from intrinsic proteases. Dissociation of the ASP-ORF2 complex after secretion in the extracellular space generates an active ASP. The polypeptide is ASP external chaperone (Aeromonas sobria).